The following is a 627-amino-acid chain: DNA-directed RNA polymerase subunit gamma (627 aa).

Positions 70, 72, 85, and 88 each coordinate Zn(2+). The Mg(2+) site is built by aspartate 468, aspartate 470, and aspartate 472.

This sequence belongs to the RNA polymerase beta' chain family. RpoC1 subfamily. In cyanobacteria the RNAP catalytic core is composed of 2 alpha, 1 beta, 1 beta', 1 gamma and 1 omega subunit. When a sigma factor is associated with the core the holoenzyme is formed, which can initiate transcription. It depends on Mg(2+) as a cofactor. The cofactor is Zn(2+).

The enzyme catalyses RNA(n) + a ribonucleoside 5'-triphosphate = RNA(n+1) + diphosphate. DNA-dependent RNA polymerase catalyzes the transcription of DNA into RNA using the four ribonucleoside triphosphates as substrates. The protein is DNA-directed RNA polymerase subunit gamma of Synechococcus sp. (strain JA-2-3B'a(2-13)) (Cyanobacteria bacterium Yellowstone B-Prime).